The chain runs to 145 residues: Large ribosomal subunit protein uL15 (145 aa).

Basic residues predominate over residues 1 to 13 (MIRSKRKINKLRG). The interval 1-44 (MIRSKRKINKLRGSRSNGGGCTKKRRGAGNKGGRGNAGASKQHW) is disordered.

Belongs to the universal ribosomal protein uL15 family. In terms of assembly, part of the 50S ribosomal subunit.

Functionally, binds to the 23S rRNA. This chain is Large ribosomal subunit protein uL15, found in Methanobrevibacter smithii (strain ATCC 35061 / DSM 861 / OCM 144 / PS).